The sequence spans 298 residues: Protoheme IX farnesyltransferase (298 aa).

A run of 9 helical transmembrane segments spans residues 29–49, 51–71, 97–117, 120–140, 148–168, 175–195, 221–241, 243–263, and 278–298; these read LIVF…PPLL, FGVA…LNCL, ETVT…HGFI, LTMW…TLIL, IVIG…AMTG, LVLF…LACY, ILWY…LGMS, GFYL…AIAL, and YSIL…LIVL.

The protein belongs to the UbiA prenyltransferase family. Protoheme IX farnesyltransferase subfamily.

It is found in the cell inner membrane. It catalyses the reaction heme b + (2E,6E)-farnesyl diphosphate + H2O = Fe(II)-heme o + diphosphate. The protein operates within porphyrin-containing compound metabolism; heme O biosynthesis; heme O from protoheme: step 1/1. Its function is as follows. Converts heme B (protoheme IX) to heme O by substitution of the vinyl group on carbon 2 of heme B porphyrin ring with a hydroxyethyl farnesyl side group. The protein is Protoheme IX farnesyltransferase of Dechloromonas aromatica (strain RCB).